A 387-amino-acid polypeptide reads, in one-letter code: 3-ketoacyl-CoA thiolase (387 aa).

Residue C91 is the Acyl-thioester intermediate of the active site. Catalysis depends on proton acceptor residues H343 and C373.

Belongs to the thiolase-like superfamily. Thiolase family. In terms of assembly, heterotetramer of two alpha chains (FadB) and two beta chains (FadA).

Its subcellular location is the cytoplasm. The enzyme catalyses an acyl-CoA + acetyl-CoA = a 3-oxoacyl-CoA + CoA. It functions in the pathway lipid metabolism; fatty acid beta-oxidation. Its function is as follows. Catalyzes the final step of fatty acid oxidation in which acetyl-CoA is released and the CoA ester of a fatty acid two carbons shorter is formed. In Yersinia pseudotuberculosis serotype O:1b (strain IP 31758), this protein is 3-ketoacyl-CoA thiolase.